Reading from the N-terminus, the 455-residue chain is tRNA modification GTPase MnmE (455 aa).

(6S)-5-formyl-5,6,7,8-tetrahydrofolate contacts are provided by arginine 24, glutamate 81, and lysine 120. The region spanning 216-378 is the TrmE-type G domain; that stretch reads GMTVVIAGRP…LREHLKACMG (163 aa). Asparagine 226 is a binding site for K(+). GTP is bound by residues 226 to 231, 245 to 251, 270 to 273, 335 to 338, and 359 to 361; these read NAGKSS, TDIAGTT, DTAG, NKAD, and SAR. Serine 230 contacts Mg(2+). Threonine 245, isoleucine 247, and threonine 250 together coordinate K(+). Position 251 (threonine 251) interacts with Mg(2+). Lysine 455 is a binding site for (6S)-5-formyl-5,6,7,8-tetrahydrofolate.

This sequence belongs to the TRAFAC class TrmE-Era-EngA-EngB-Septin-like GTPase superfamily. TrmE GTPase family. Homodimer. Heterotetramer of two MnmE and two MnmG subunits. The cofactor is K(+).

It is found in the cytoplasm. In terms of biological role, exhibits a very high intrinsic GTPase hydrolysis rate. Involved in the addition of a carboxymethylaminomethyl (cmnm) group at the wobble position (U34) of certain tRNAs, forming tRNA-cmnm(5)s(2)U34. This Pseudomonas paraeruginosa (strain DSM 24068 / PA7) (Pseudomonas aeruginosa (strain PA7)) protein is tRNA modification GTPase MnmE.